The chain runs to 252 residues: Ubiquinone biosynthesis O-methyltransferase (252 aa).

Residues Arg41, Gly72, Asp93, and Met136 each contribute to the S-adenosyl-L-methionine site.

Belongs to the methyltransferase superfamily. UbiG/COQ3 family.

The catalysed reaction is a 3-demethylubiquinol + S-adenosyl-L-methionine = a ubiquinol + S-adenosyl-L-homocysteine + H(+). It catalyses the reaction a 3-(all-trans-polyprenyl)benzene-1,2-diol + S-adenosyl-L-methionine = a 2-methoxy-6-(all-trans-polyprenyl)phenol + S-adenosyl-L-homocysteine + H(+). The protein operates within cofactor biosynthesis; ubiquinone biosynthesis. O-methyltransferase that catalyzes the 2 O-methylation steps in the ubiquinone biosynthetic pathway. The chain is Ubiquinone biosynthesis O-methyltransferase from Rhizobium leguminosarum bv. trifolii (strain WSM2304).